Consider the following 634-residue polypeptide: Probable LRR receptor-like serine/threonine-protein kinase At2g23950 (634 aa).

A signal peptide spans 1–27 (MVVMKLITMKIFSVLLLLCFFVTCSLS). The Extracellular portion of the chain corresponds to 28 to 236 (SEPRNPEVEA…SSGRRTNILA (209 aa)). 2 N-linked (GlcNAc...) asparagine glycosylation sites follow: N96 and N109. 4 LRR repeats span residues 99–121 (NLRQ…ICSL), 123–145 (KLQT…VNQL), 147–167 (NLQY…ASLS), and 171–193 (HLSF…PART). N155 carries N-linked (GlcNAc...) asparagine glycosylation. A helical transmembrane segment spans residues 237–257 (VALGVSLGFAVSVILSLGFIW). Over 258-634 (YRKKQRRLTM…SFAMELSGPR (377 aa)) the chain is Cytoplasmic. Position 296 is a phosphothreonine (T296). A Protein kinase domain is found at 299-554 (FSSKSILGAG…QVALLCTQFL (256 aa)). Residue 305–313 (LGAGGFGNV) participates in ATP binding. The residue at position 322 (T322) is a Phosphothreonine. Residue K327 coordinates ATP. Residues S380 and S383 each carry the phosphoserine modification. T395 is subject to Phosphothreonine. The active-site Proton acceptor is D422. Residues T455, T456, and T461 each carry the phosphothreonine modification. Y469 is modified (phosphotyrosine). S471 is modified (phosphoserine). T472 carries the phosphothreonine modification. S476 bears the Phosphoserine mark. A Phosphothreonine modification is found at T551.

This sequence belongs to the protein kinase superfamily. Ser/Thr protein kinase family.

It localises to the membrane. The enzyme catalyses L-seryl-[protein] + ATP = O-phospho-L-seryl-[protein] + ADP + H(+). The catalysed reaction is L-threonyl-[protein] + ATP = O-phospho-L-threonyl-[protein] + ADP + H(+). The chain is Probable LRR receptor-like serine/threonine-protein kinase At2g23950 from Arabidopsis thaliana (Mouse-ear cress).